A 740-amino-acid polypeptide reads, in one-letter code: Dipeptidyl peptidase family member 6 (740 aa).

Methionine 1 is a topological domain (cytoplasmic). A helical; Signal-anchor for type II membrane protein membrane pass occupies residues 2–22 (LFLPILILNLLIITHAIDIIP). Over 23-740 (REVLFQDPKY…VMNRIFPVQG (718 aa)) the chain is Lumenal. Asparagine 108, asparagine 308, and asparagine 506 each carry an N-linked (GlcNAc...) asparagine glycan. Active-site charge relay system residues include serine 516, aspartate 604, and histidine 636. Cysteine 535 and cysteine 658 are oxidised to a cystine. N-linked (GlcNAc...) asparagine glycosylation is present at asparagine 672.

The protein belongs to the peptidase S9B family. DPPIV subfamily.

The protein localises to the cell membrane. Functionally, removes N-terminal dipeptides sequentially from polypeptides. Essential for control of distal tip cell migration. This Caenorhabditis elegans protein is Dipeptidyl peptidase family member 6 (dpf-6).